The sequence spans 436 residues: Transcriptional regulator dmxR14 (436 aa).

A compositionally biased stretch (polar residues) spans 1 to 27 (MEEAETNTQVDSVPSNSVRSGAELSSK). The disordered stretch occupies residues 1 to 32 (MEEAETNTQVDSVPSNSVRSGAELSSKSKLRD). Residues 34–61 (CHACARSKVRCPKQKPSCSRCEARGTTC) constitute a DNA-binding region (zn(2)-C6 fungal-type). Residues 67–136 (RRPGRRRETS…ITTVHNGPEN (70 aa)) are disordered. Positions 90–136 (SHANNRNSPSFSSTRSTLPSPIASDSNSNFTQPQNSSITTVHNGPEN) are enriched in polar residues.

The protein localises to the nucleus. Transcriptional regulator; part of the gene cluster that mediates the biosynthesis of the dimeric xanthones cryptosporioptides. The chain is Transcriptional regulator dmxR14 from Cryptosporiopsis sp. (strain 8999).